Reading from the N-terminus, the 465-residue chain is Chromosomal replication initiator protein DnaA (465 aa).

The tract at residues M1–V84 is domain I, interacts with DnaA modulators. Positions V84–S128 are domain II. Residues A91–A120 form a disordered region. A domain III, AAA+ region region spans residues N129–A345. Residues G173, G175, K176, and T177 each coordinate ATP. The segment at N346 to S465 is domain IV, binds dsDNA.

Belongs to the DnaA family. Oligomerizes as a right-handed, spiral filament on DNA at oriC.

Its subcellular location is the cytoplasm. Plays an essential role in the initiation and regulation of chromosomal replication. ATP-DnaA binds to the origin of replication (oriC) to initiate formation of the DNA replication initiation complex once per cell cycle. Binds the DnaA box (a 9 base pair repeat at the origin) and separates the double-stranded (ds)DNA. Forms a right-handed helical filament on oriC DNA; dsDNA binds to the exterior of the filament while single-stranded (ss)DNA is stabiized in the filament's interior. The ATP-DnaA-oriC complex binds and stabilizes one strand of the AT-rich DNA unwinding element (DUE), permitting loading of DNA polymerase. After initiation quickly degrades to an ADP-DnaA complex that is not apt for DNA replication. Binds acidic phospholipids. This Pectobacterium carotovorum subsp. carotovorum (strain PC1) protein is Chromosomal replication initiator protein DnaA.